The following is a 388-amino-acid chain: Oxytocin receptor (388 aa).

Residues 1–38 (MEGTPAANWSIELDLGSGVPPGAEGNLTAGPPRRNEAL) lie on the Extracellular side of the membrane. Residues asparagine 8 and asparagine 26 are each glycosylated (N-linked (GlcNAc...) asparagine). A helical transmembrane segment spans residues 39–63 (ARVEVAVLCLILFLALSGNACVLLA). The Cytoplasmic segment spans residues 64–74 (LRTTRHKHSRL). A helical transmembrane segment spans residues 75-97 (FFFMKHLSIADLVVAVFQVLPQL). The Extracellular segment spans residues 98 to 113 (LWDITFRFYGPDLLCR). Cysteine 112 and cysteine 187 are oxidised to a cystine. A helical transmembrane segment spans residues 114 to 135 (LVKYLQVVGMFASTYLLLLMSL). Over 136-154 (DRCLAICQPLRSLRRRTDR) the chain is Cytoplasmic. A helical transmembrane segment spans residues 155 to 175 (LAVLATWLGCLVASVPQVHIF). Over 176 to 202 (SLREVADGVFDCWAVFIQPWGPKAYVT) the chain is Extracellular. Residues 203-225 (WITLAVYIVPVIVLAACYGLISF) form a helical membrane-spanning segment. At 226 to 274 (KIWQNLRLKTAAAAAAAEGSDAAGGAGRAALARVSSVKLISKAKIRTVK) the chain is on the cytoplasmic side. The chain crosses the membrane as a helical span at residues 275-293 (MTFIIVLAFIVCWTPFFFV). Over 294–308 (QMWSVWDVNAPKEAS) the chain is Extracellular. A helical membrane pass occupies residues 309–331 (AFIIAMLLASLNSCCNPWIYMLF). The Cytoplasmic portion of the chain corresponds to 332 to 388 (TGHLFHELVQRFLCCSARYLKGSRPGETSISKKSNSSTFVLSRRSSSQRSCSQPSSA). Residues 354 to 388 (SRPGETSISKKSNSSTFVLSRRSSSQRSCSQPSSA) are disordered. A phosphoserine mark is found at serine 365 and serine 367. The span at 365–388 (SNSSTFVLSRRSSSQRSCSQPSSA) shows a compositional bias: low complexity.

It belongs to the G-protein coupled receptor 1 family. Vasopressin/oxytocin receptor subfamily.

Its subcellular location is the cell membrane. Its function is as follows. Receptor for oxytocin. The activity of this receptor is mediated by G proteins which activate a phosphatidylinositol-calcium second messenger system. In Mus musculus (Mouse), this protein is Oxytocin receptor (Oxtr).